A 204-amino-acid polypeptide reads, in one-letter code: 3,4-dihydroxy-2-butanone 4-phosphate synthase (204 aa).

Glutamate 27 contributes to the Mg(2+) binding site. Aspartate 31 is a D-ribulose 5-phosphate binding site. Position 56 is an S-glutathionyl cysteine (cysteine 56). D-ribulose 5-phosphate contacts are provided by residues threonine 82 and 140-144 (RDGHT). Mg(2+) is bound at residue histidine 143.

Belongs to the DHBP synthase family. As to quaternary structure, homodimer. It depends on Mg(2+) as a cofactor. Mn(2+) serves as cofactor. In terms of processing, S-glutathionylation is reversible and dependent on a glutaredoxin.

The catalysed reaction is D-ribulose 5-phosphate = (2S)-2-hydroxy-3-oxobutyl phosphate + formate + H(+). It participates in cofactor biosynthesis; riboflavin biosynthesis; 2-hydroxy-3-oxobutyl phosphate from D-ribulose 5-phosphate: step 1/1. In terms of biological role, catalyzes the conversion of D-ribulose 5-phosphate to formate and 3,4-dihydroxy-2-butanone 4-phosphate. The polypeptide is 3,4-dihydroxy-2-butanone 4-phosphate synthase (Schizosaccharomyces pombe (strain 972 / ATCC 24843) (Fission yeast)).